Reading from the N-terminus, the 235-residue chain is MKKRSRRFSTLLKQIEADKLYSPLDALNLMKNLSNVKFIETAEVHIVLGLDPKYADQQLRTTVMLPKGTGKIMRVAVITQNNKTHEAKSSGADIVGGEDLIDEIKKGRLDFDKLIATPDMMMSIAKLGKILGPKGLMPSPKAGTVTHNLITTIKEFKAGKLEYKIDRSGILHIPFGKLNFNVEDLHINLITLQESIDRNRPQGSKGKYWKSVHINSTMGPSIPLDIQLLRNNYVL.

This sequence belongs to the universal ribosomal protein uL1 family. In terms of assembly, part of the 50S ribosomal subunit.

It is found in the plastid. Its subcellular location is the chloroplast. Binds directly to 23S rRNA. Might be involved in E site tRNA release (Potential). This Gracilaria tenuistipitata var. liui (Red alga) protein is Large ribosomal subunit protein uL1c (rpl1).